The chain runs to 396 residues: 1-deoxy-D-xylulose 5-phosphate reductoisomerase (396 aa).

NADPH is bound by residues Thr-13, Gly-14, Ser-15, Ile-16, and Asn-127. Lys-128 contributes to the 1-deoxy-D-xylulose 5-phosphate binding site. Residue Glu-129 participates in NADPH binding. Asp-153 lines the Mn(2+) pocket. 1-deoxy-D-xylulose 5-phosphate is bound by residues Ser-154, Glu-155, Ser-184, and His-207. Glu-155 is a Mn(2+) binding site. Gly-213 is an NADPH binding site. 4 residues coordinate 1-deoxy-D-xylulose 5-phosphate: Ser-220, Asn-225, Lys-226, and Glu-229. Glu-229 lines the Mn(2+) pocket.

It belongs to the DXR family. The cofactor is Mg(2+). Requires Mn(2+) as cofactor.

It carries out the reaction 2-C-methyl-D-erythritol 4-phosphate + NADP(+) = 1-deoxy-D-xylulose 5-phosphate + NADPH + H(+). Its pathway is isoprenoid biosynthesis; isopentenyl diphosphate biosynthesis via DXP pathway; isopentenyl diphosphate from 1-deoxy-D-xylulose 5-phosphate: step 1/6. Its function is as follows. Catalyzes the NADPH-dependent rearrangement and reduction of 1-deoxy-D-xylulose-5-phosphate (DXP) to 2-C-methyl-D-erythritol 4-phosphate (MEP). In Pseudomonas putida (strain W619), this protein is 1-deoxy-D-xylulose 5-phosphate reductoisomerase.